The chain runs to 226 residues: V-type proton ATPase subunit E 2 (226 aa).

This sequence belongs to the V-ATPase E subunit family. In terms of assembly, V-ATPase is a heteromultimeric enzyme made up of two complexes: the ATP-hydrolytic V1 complex and the proton translocation V0 complex. The V1 complex consists of three catalytic AB heterodimers that form a heterohexamer, three peripheral stalks each consisting of EG heterodimers, one central rotor including subunits D and F, and the regulatory subunits C and H. The proton translocation complex V0 consists of the proton transport subunit a, a ring of proteolipid subunits c9c'', rotary subunit d, subunits e and f, and the accessory subunits ATP6AP1/Ac45 and ATP6AP2/PRR. In terms of tissue distribution, testis specific.

Subunit of the V1 complex of vacuolar(H+)-ATPase (V-ATPase), a multisubunit enzyme composed of a peripheral complex (V1) that hydrolyzes ATP and a membrane integral complex (V0) that translocates protons. V-ATPase is responsible for acidifying and maintaining the pH of intracellular compartments and in some cell types, is targeted to the plasma membrane, where it is responsible for acidifying the extracellular environment. In Homo sapiens (Human), this protein is V-type proton ATPase subunit E 2 (ATP6V1E2).